A 917-amino-acid chain; its full sequence is Glutamate receptor (917 aa).

The N-terminal stretch at Met-1–Ser-19 is a signal peptide. Over Thr-20–Ser-556 the chain is Extracellular. Residues Asn-62, Asn-95, Asn-121, Asn-125, Asn-229, Asn-251, Asn-261, Asn-272, Asn-418, Asn-419, Asn-424, and Asn-491 are each glycosylated (N-linked (GlcNAc...) asparagine). A helical membrane pass occupies residues Ser-557–Val-577. The Cytoplasmic segment spans residues Ser-578–Ser-631. Residues Val-632 to Leu-652 form a helical membrane-spanning segment. The Extracellular segment spans residues Thr-653–Asn-818. N-linked (GlcNAc...) asparagine glycosylation is present at Asn-775. Residues Val-819–Phe-839 form a helical membrane-spanning segment. Over Glu-840–Val-917 the chain is Cytoplasmic. Residues His-871–Thr-896 form a disordered region.

The protein belongs to the glutamate-gated ion channel (TC 1.A.10.1) family.

It is found in the cell membrane. The protein localises to the postsynaptic cell membrane. Receptor for glutamate. L-glutamate acts as an excitatory neurotransmitter at many synapses in the central nervous system. The postsynaptic actions of Glu are mediated by a variety of receptors. The sequence is that of Glutamate receptor from Lymnaea stagnalis (Great pond snail).